A 209-amino-acid chain; its full sequence is Superoxide dismutase [Mn/Fe] (209 aa).

Residues histidine 38, histidine 90, aspartate 172, and histidine 176 each coordinate Fe(3+). Positions 38, 90, 172, and 176 each coordinate Mn(2+).

The protein belongs to the iron/manganese superoxide dismutase family. Requires Mn(2+) as cofactor. Fe(3+) is required as a cofactor.

The catalysed reaction is 2 superoxide + 2 H(+) = H2O2 + O2. Its function is as follows. Destroys superoxide anion radicals which are normally produced within the cells and which are toxic to biological systems. Catalyzes the dismutation of superoxide anion radicals into O2 and H2O2 by successive reduction and oxidation of the transition metal ion at the active site. This is Superoxide dismutase [Mn/Fe] (sodB) from Rickettsia bellii (strain RML369-C).